The primary structure comprises 213 residues: Small ribosomal subunit protein eS1 (213 aa).

A disordered region spans residues 189 to 213; sequence ARPEEVAAEEETAVDVDEEDVDVEA. Over residues 194–213 the composition is skewed to acidic residues; the sequence is VAAEEETAVDVDEEDVDVEA.

Belongs to the eukaryotic ribosomal protein eS1 family.

The sequence is that of Small ribosomal subunit protein eS1 from Haloarcula marismortui (strain ATCC 43049 / DSM 3752 / JCM 8966 / VKM B-1809) (Halobacterium marismortui).